A 104-amino-acid polypeptide reads, in one-letter code: Nucleoid-associated protein Dtur_0258 (104 aa).

The segment at glutamate 84 to phenylalanine 104 is disordered.

It belongs to the YbaB/EbfC family. As to quaternary structure, homodimer.

The protein localises to the cytoplasm. The protein resides in the nucleoid. Binds to DNA and alters its conformation. May be involved in regulation of gene expression, nucleoid organization and DNA protection. This Dictyoglomus turgidum (strain DSM 6724 / Z-1310) protein is Nucleoid-associated protein Dtur_0258.